A 391-amino-acid chain; its full sequence is Probable acridone synthase 4 (391 aa).

Cysteine 164 is a catalytic residue.

This sequence belongs to the thiolase-like superfamily. Chalcone/stilbene synthases family.

It carries out the reaction N-methylanthraniloyl-CoA + 3 malonyl-CoA + 3 H(+) = 1,3-dihydroxy-N-methylacridone + 3 CO2 + 4 CoA + H2O. The sequence is that of Probable acridone synthase 4 (ACS4) from Ruta graveolens (Common rue).